The sequence spans 250 residues: Small ribosomal subunit protein uS5 (250 aa).

Over residues 1–22 (MNVVETSSEMNSNVEKASTPKQ) the composition is skewed to polar residues. Positions 1 to 40 (MNVVETSSEMNSNVEKASTPKQENNKRFERKSRPSSRQKV) are disordered. In terms of domain architecture, S5 DRBM spans 45 to 108 (FEEKVVTIRR…KEAKKNLVSV (64 aa)).

This sequence belongs to the universal ribosomal protein uS5 family. In terms of assembly, part of the 30S ribosomal subunit. Contacts proteins S4 and S8.

In terms of biological role, with S4 and S12 plays an important role in translational accuracy. Its function is as follows. Located at the back of the 30S subunit body where it stabilizes the conformation of the head with respect to the body. This Mycoplasma capricolum subsp. capricolum (strain California kid / ATCC 27343 / NCTC 10154) protein is Small ribosomal subunit protein uS5.